A 275-amino-acid polypeptide reads, in one-letter code: N-(5'-phosphoribosyl)anthranilate isomerase 1, chloroplastic (275 aa).

The transit peptide at 1–32 (MSTGISTDLHVHFGALNFSKTYKSGLSNRTVS) directs the protein to the chloroplast.

This sequence belongs to the TrpF family. As to expression, expressed in roots and shoots.

Its subcellular location is the plastid. The protein resides in the chloroplast. It catalyses the reaction N-(5-phospho-beta-D-ribosyl)anthranilate = 1-(2-carboxyphenylamino)-1-deoxy-D-ribulose 5-phosphate. The protein operates within amino-acid biosynthesis; L-tryptophan biosynthesis; L-tryptophan from chorismate: step 3/5. Functionally, catalyzes the conversion of 5-phosphoribosylanthranilate to l-(O-carboxyphenylamino)-l-deoxyribulose-5-phosphate, which is the third step of the tryptophan biosynthetic pathway. The protein is N-(5'-phosphoribosyl)anthranilate isomerase 1, chloroplastic (PAI1) of Arabidopsis thaliana (Mouse-ear cress).